The chain runs to 317 residues: Carbonic anhydrase 5B, mitochondrial (317 aa).

Residues 1–33 (MAVMNHLRVILQVSSSTLPWRRCWVPRLVPRRS) constitute a mitochondrion transit peptide. Positions 37–296 (YTCTYRTRNR…LMNRTVRSSF (260 aa)) constitute an Alpha-carbonic anhydrase domain. Zn(2+) is bound by residues His130, His132, and His155. 235–236 (TT) serves as a coordination point for substrate.

It belongs to the alpha-carbonic anhydrase family. It depends on Zn(2+) as a cofactor. In terms of tissue distribution, expressed in the heart, liver, lung, kidney, testis, and skeletal muscle (at protein level).

It localises to the mitochondrion. It carries out the reaction hydrogencarbonate + H(+) = CO2 + H2O. In terms of biological role, mitochondrial carbonic anhydrase that catalyzes the reversible conversion of carbon dioxide to bicarbonate/HCO3. The sequence is that of Carbonic anhydrase 5B, mitochondrial (Ca5b) from Mus musculus (Mouse).